Reading from the N-terminus, the 545-residue chain is CTP synthase (545 aa).

The amidoligase domain stretch occupies residues 1-266; it reads MTTKYIFVTG…DQLVVDRFGL (266 aa). Ser-14 contacts CTP. Ser-14 provides a ligand contact to UTP. ATP is bound by residues 15 to 20 and Asp-72; that span reads SLGKGI. Residues Asp-72 and Glu-140 each coordinate Mg(2+). Residues 147–149, 187–192, and Lys-223 contribute to the CTP site; these read DIE and KTKPTQ. Residues 187–192 and Lys-223 each bind UTP; that span reads KTKPTQ. Position 239-241 (239-241) interacts with ATP; it reads KDV. A Glutamine amidotransferase type-1 domain is found at 291-542; sequence TIGMVGKYVS…IQAAGEYMKR (252 aa). Gly-352 is an L-glutamine binding site. The active-site Nucleophile; for glutamine hydrolysis is the Cys-379. Residues 380–383, Glu-403, and Arg-470 each bind L-glutamine; that span reads LGMQ. Catalysis depends on residues His-515 and Glu-517.

Belongs to the CTP synthase family. In terms of assembly, homotetramer.

It carries out the reaction UTP + L-glutamine + ATP + H2O = CTP + L-glutamate + ADP + phosphate + 2 H(+). The catalysed reaction is L-glutamine + H2O = L-glutamate + NH4(+). It catalyses the reaction UTP + NH4(+) + ATP = CTP + ADP + phosphate + 2 H(+). It functions in the pathway pyrimidine metabolism; CTP biosynthesis via de novo pathway; CTP from UDP: step 2/2. Allosterically activated by GTP, when glutamine is the substrate; GTP has no effect on the reaction when ammonia is the substrate. The allosteric effector GTP functions by stabilizing the protein conformation that binds the tetrahedral intermediate(s) formed during glutamine hydrolysis. Inhibited by the product CTP, via allosteric rather than competitive inhibition. Functionally, catalyzes the ATP-dependent amination of UTP to CTP with either L-glutamine or ammonia as the source of nitrogen. Regulates intracellular CTP levels through interactions with the four ribonucleotide triphosphates. The sequence is that of CTP synthase from Tolumonas auensis (strain DSM 9187 / NBRC 110442 / TA 4).